A 303-amino-acid chain; its full sequence is UDP-3-O-acyl-N-acetylglucosamine deacetylase (303 aa).

Zn(2+)-binding residues include His77, His236, and Asp240. His263 (proton donor) is an active-site residue.

This sequence belongs to the LpxC family. Zn(2+) is required as a cofactor.

It catalyses the reaction a UDP-3-O-[(3R)-3-hydroxyacyl]-N-acetyl-alpha-D-glucosamine + H2O = a UDP-3-O-[(3R)-3-hydroxyacyl]-alpha-D-glucosamine + acetate. The protein operates within glycolipid biosynthesis; lipid IV(A) biosynthesis; lipid IV(A) from (3R)-3-hydroxytetradecanoyl-[acyl-carrier-protein] and UDP-N-acetyl-alpha-D-glucosamine: step 2/6. Functionally, catalyzes the hydrolysis of UDP-3-O-myristoyl-N-acetylglucosamine to form UDP-3-O-myristoylglucosamine and acetate, the committed step in lipid A biosynthesis. The sequence is that of UDP-3-O-acyl-N-acetylglucosamine deacetylase from Ruthia magnifica subsp. Calyptogena magnifica.